We begin with the raw amino-acid sequence, 451 residues long: Epi-neemfruitin B 7-O-acetyltransferse L7AT (451 aa).

Active-site proton acceptor residues include histidine 165 and aspartate 384.

The protein belongs to the plant acyltransferase family. As to quaternary structure, monomer. Mainly expressed in petioles and, to a lower extent, in roots.

It catalyses the reaction epi-neemfruitin B + acetyl-CoA = 7-acetyl-epi-neemfruitin B + CoA. It functions in the pathway secondary metabolite biosynthesis; terpenoid biosynthesis. Acetyltransferase involved in the biosynthesis of limonoids triterpene natural products such as azadirachtin, an antifeedant widely used as bioinsecticide, and possessing many medicinal applications including anti-tumoral, anti-malarial, anti-rheumatic, antibacterial, anti-inflammatory, anti-pyretic and diuretic effects. Catalyzes the formation of 7-acetyl-epi-neemfruitin B from epi-neemfruitin B. The protein is Epi-neemfruitin B 7-O-acetyltransferse L7AT of Melia azedarach (Chinaberry tree).